Reading from the N-terminus, the 150-residue chain is Transcriptional repressor NrdR (150 aa).

A zinc finger lies at 3–34; sequence CPFCNFEESKVVDSRATDDNTTIRRRRECLNC. The region spanning 49-139 is the ATP-cone domain; sequence VLVVKKDLTR…VYRQFKDINT (91 aa).

It belongs to the NrdR family. The cofactor is Zn(2+).

Negatively regulates transcription of bacterial ribonucleotide reductase nrd genes and operons by binding to NrdR-boxes. The sequence is that of Transcriptional repressor NrdR from Clostridium botulinum (strain Alaska E43 / Type E3).